Reading from the N-terminus, the 92-residue chain is CRISPR-associated endoribonuclease Cas2 1 (92 aa).

A Mg(2+)-binding site is contributed by Asp10.

It belongs to the CRISPR-associated endoribonuclease Cas2 protein family. Homodimer, forms a heterotetramer with a Cas1 homodimer. The cofactor is Mg(2+).

In terms of biological role, CRISPR (clustered regularly interspaced short palindromic repeat), is an adaptive immune system that provides protection against mobile genetic elements (viruses, transposable elements and conjugative plasmids). CRISPR clusters contain sequences complementary to antecedent mobile elements and target invading nucleic acids. CRISPR clusters are transcribed and processed into CRISPR RNA (crRNA). Functions as a ssRNA-specific endoribonuclease. Involved in the integration of spacer DNA into the CRISPR cassette. The protein is CRISPR-associated endoribonuclease Cas2 1 of Thermodesulfovibrio yellowstonii (strain ATCC 51303 / DSM 11347 / YP87).